We begin with the raw amino-acid sequence, 181 residues long: Germinal center-associated signaling and motility protein (181 aa).

Serine 102 carries the post-translational modification Phosphoserine. The span at 117 to 128 (AERHKESSRGTE) shows a compositional bias: basic and acidic residues. Positions 117-181 (AERHKESSRG…PYETHFSYPQ (65 aa)) are disordered. Residue tyrosine 150 is modified to Phosphotyrosine.

As to quaternary structure, interacts with ACTB and MYH2; the interaction with MYH2 is increased by IL6-induced phosphorylation. Interacts (via C-terminus) with ARHGEF11 (via DH domain). Interacts with ARHGEF12. Interacts with SYK; the interaction increases after B-cell receptor stimulation, resulting in enhanced SYK autophosphorylation and activity. Phosphorylation on tyrosine residues can be induced by IL6. Phosphorylation is mediated by LYN. In terms of processing, targeted by the ubiquitin E3 ligase subunit FBXO10 to mediate its ubiquitination and degradation. As to expression, highly expressed in normal germinal center (GC) B-cells. Expressed in spleen and, to a lesser extent, bone marrow.

Its subcellular location is the cytoplasm. It is found in the cell membrane. Functionally, involved in the negative regulation of lymphocyte motility. It mediates the migration-inhibitory effects of IL6. Serves as a positive regulator of the RhoA signaling pathway. Enhancement of RhoA activation results in inhibition of lymphocyte and lymphoma cell motility by activation of its downstream effector ROCK. Is a regulator of B-cell receptor signaling, that acts through SYK kinase activation. The chain is Germinal center-associated signaling and motility protein (Gcsam) from Mus musculus (Mouse).